Reading from the N-terminus, the 82-residue chain is Exodeoxyribonuclease 7 small subunit (82 aa).

This sequence belongs to the XseB family. As to quaternary structure, heterooligomer composed of large and small subunits.

It is found in the cytoplasm. It carries out the reaction Exonucleolytic cleavage in either 5'- to 3'- or 3'- to 5'-direction to yield nucleoside 5'-phosphates.. Functionally, bidirectionally degrades single-stranded DNA into large acid-insoluble oligonucleotides, which are then degraded further into small acid-soluble oligonucleotides. In Sodalis glossinidius (strain morsitans), this protein is Exodeoxyribonuclease 7 small subunit.